The primary structure comprises 121 residues: Small ribosomal subunit protein uS13 (121 aa).

The interval 90–121 (RHRRGLPTRGQNTKNNARTRKGPTKTVAGKKK) is disordered. The span at 106–121 (ARTRKGPTKTVAGKKK) shows a compositional bias: basic residues.

The protein belongs to the universal ribosomal protein uS13 family. Part of the 30S ribosomal subunit. Forms a loose heterodimer with protein S19. Forms two bridges to the 50S subunit in the 70S ribosome.

Its function is as follows. Located at the top of the head of the 30S subunit, it contacts several helices of the 16S rRNA. In the 70S ribosome it contacts the 23S rRNA (bridge B1a) and protein L5 of the 50S subunit (bridge B1b), connecting the 2 subunits; these bridges are implicated in subunit movement. Contacts the tRNAs in the A and P-sites. The sequence is that of Small ribosomal subunit protein uS13 from Enterococcus faecalis (strain ATCC 700802 / V583).